A 540-amino-acid chain; its full sequence is Pentatricopeptide repeat-containing protein At1g80880, mitochondrial (540 aa).

A mitochondrion-targeting transit peptide spans 1–87 (MAAIVAIGRK…ETFDINLTAL (87 aa)). PPR repeat units follow at residues 154–184 (DQKSCDLMIWVLGNHQKFNIAWCLIRDMFNV), 188–222 (TRKAMFLMMDRYAAANDTSQAIRTFDIMDKFKHTP), 223–253 (YDEAFQGLLCALCRHGHIEKAEEFMLASKKL), 257–292 (DVEGFNVILNGWCNIWTDVTEAKRIWREMGNYCITP), 293–327 (NKDSYSHMISCFSKVGNLFDSLRLYDEMKKRGLAP), 328–362 (GIEVYNSLVYVLTREDCFDEAMKLMKKLNEEGLKP), 363–397 (DSVTYNSMIRPLCEAGKLDVARNVLATMISENLSP), 402–428 (FHAFLEAVNFEKTLEVLGQMKISDLGP), 429–463 (TEETFLLILGKLFKGKQPENALKIWAEMDRFEIVA), and 464–498 (NPALYLATIQGLLSCGWLEKAREIYSEMKSKGFVG). Positions 514–540 (VRKSKRMNLQKVGSQEGYKGQRSVDRK) are disordered.

Belongs to the PPR family. P subfamily.

It is found in the mitochondrion. The protein is Pentatricopeptide repeat-containing protein At1g80880, mitochondrial of Arabidopsis thaliana (Mouse-ear cress).